The following is an 865-amino-acid chain: Alanine--tRNA ligase (865 aa).

Residues His-554, His-558, Cys-656, and His-660 each contribute to the Zn(2+) site.

Belongs to the class-II aminoacyl-tRNA synthetase family. It depends on Zn(2+) as a cofactor.

It localises to the cytoplasm. The enzyme catalyses tRNA(Ala) + L-alanine + ATP = L-alanyl-tRNA(Ala) + AMP + diphosphate. Its function is as follows. Catalyzes the attachment of alanine to tRNA(Ala) in a two-step reaction: alanine is first activated by ATP to form Ala-AMP and then transferred to the acceptor end of tRNA(Ala). Also edits incorrectly charged Ser-tRNA(Ala) and Gly-tRNA(Ala) via its editing domain. The sequence is that of Alanine--tRNA ligase from Francisella tularensis subsp. mediasiatica (strain FSC147).